Consider the following 295-residue polypeptide: Cell shape-determining protein MreC (295 aa).

An N-terminal signal peptide occupies residues 1–34; sequence MPQFFLNKRLIILLISIIVLVALVGFSLRDRENA. The stretch at 66-112 forms a coiled coil; it reads VVDLKNTYTENQHLKERLEELAQLESEVADLKKENKDLKESLDITDS. The tract at residues 276-295 is disordered; sequence SAEAGTTDDDTTSSDTTGGQ.

This sequence belongs to the MreC family. In terms of assembly, homooligomer of 24 subunits, arranged as 12 dimers.

Involved in formation and maintenance of cell shape. The sequence is that of Cell shape-determining protein MreC from Listeria monocytogenes serovar 1/2a (strain ATCC BAA-679 / EGD-e).